The following is a 433-amino-acid chain: 3-phosphoshikimate 1-carboxyvinyltransferase (433 aa).

Lysine 22, serine 23, and arginine 27 together coordinate 3-phosphoshikimate. Lysine 22 is a binding site for phosphoenolpyruvate. Phosphoenolpyruvate contacts are provided by glycine 95 and arginine 123. Serine 167, glutamine 169, aspartate 315, and lysine 342 together coordinate 3-phosphoshikimate. Phosphoenolpyruvate is bound at residue glutamine 169. The active-site Proton acceptor is the aspartate 315. Residues arginine 346 and arginine 387 each coordinate phosphoenolpyruvate.

This sequence belongs to the EPSP synthase family. In terms of assembly, monomer.

It is found in the cytoplasm. The enzyme catalyses 3-phosphoshikimate + phosphoenolpyruvate = 5-O-(1-carboxyvinyl)-3-phosphoshikimate + phosphate. It participates in metabolic intermediate biosynthesis; chorismate biosynthesis; chorismate from D-erythrose 4-phosphate and phosphoenolpyruvate: step 6/7. Functionally, catalyzes the transfer of the enolpyruvyl moiety of phosphoenolpyruvate (PEP) to the 5-hydroxyl of shikimate-3-phosphate (S3P) to produce enolpyruvyl shikimate-3-phosphate and inorganic phosphate. This chain is 3-phosphoshikimate 1-carboxyvinyltransferase, found in Legionella pneumophila (strain Corby).